The following is a 507-amino-acid chain: Probable cytosol aminopeptidase (507 aa).

Positions 275 and 280 each coordinate Mn(2+). The active site involves Lys-287. Mn(2+) is bound by residues Asp-298, Asp-357, and Glu-359. Arg-361 is an active-site residue.

It belongs to the peptidase M17 family. Mn(2+) serves as cofactor.

It localises to the cytoplasm. The enzyme catalyses Release of an N-terminal amino acid, Xaa-|-Yaa-, in which Xaa is preferably Leu, but may be other amino acids including Pro although not Arg or Lys, and Yaa may be Pro. Amino acid amides and methyl esters are also readily hydrolyzed, but rates on arylamides are exceedingly low.. It carries out the reaction Release of an N-terminal amino acid, preferentially leucine, but not glutamic or aspartic acids.. In terms of biological role, presumably involved in the processing and regular turnover of intracellular proteins. Catalyzes the removal of unsubstituted N-terminal amino acids from various peptides. This Rhodopirellula baltica (strain DSM 10527 / NCIMB 13988 / SH1) protein is Probable cytosol aminopeptidase.